Consider the following 99-residue polypeptide: Aspartyl/glutamyl-tRNA(Asn/Gln) amidotransferase subunit C (99 aa).

This sequence belongs to the GatC family. Heterotrimer of A, B and C subunits.

The enzyme catalyses L-glutamyl-tRNA(Gln) + L-glutamine + ATP + H2O = L-glutaminyl-tRNA(Gln) + L-glutamate + ADP + phosphate + H(+). The catalysed reaction is L-aspartyl-tRNA(Asn) + L-glutamine + ATP + H2O = L-asparaginyl-tRNA(Asn) + L-glutamate + ADP + phosphate + 2 H(+). Functionally, allows the formation of correctly charged Asn-tRNA(Asn) or Gln-tRNA(Gln) through the transamidation of misacylated Asp-tRNA(Asn) or Glu-tRNA(Gln) in organisms which lack either or both of asparaginyl-tRNA or glutaminyl-tRNA synthetases. The reaction takes place in the presence of glutamine and ATP through an activated phospho-Asp-tRNA(Asn) or phospho-Glu-tRNA(Gln). In Ralstonia pickettii (strain 12J), this protein is Aspartyl/glutamyl-tRNA(Asn/Gln) amidotransferase subunit C.